Here is a 205-residue protein sequence, read N- to C-terminus: Recombination protein RecR (205 aa).

A C4-type zinc finger spans residues 64-79 (CRRCFNITVDELCPIC). One can recognise a Toprim domain in the interval 87–182 (TKICVVEEPL…RVTRPARGLP (96 aa)).

Belongs to the RecR family.

In terms of biological role, may play a role in DNA repair. It seems to be involved in an RecBC-independent recombinational process of DNA repair. It may act with RecF and RecO. The protein is Recombination protein RecR of Chloroflexus aggregans (strain MD-66 / DSM 9485).